A 328-amino-acid polypeptide reads, in one-letter code: MMENVFDYEDIQLIPAKCIVNSRSECDTTVTLGKHKFKLPVVPANMQTIIDERIATYLAENNYFYIMHRFQPEKRISFIRDMQSRGLIASISVGVKEDEYEFVQQLAAEQLTPEYITIDIAHGHSNAVINMIQHIKKHLPESFVIAGNVGTPEAVRELENAGADATKVGIGPGKVCITKIKTGFGTGGWQLAALRWCAKAASKPIIADGGIRTHGDVAKSIRFGATMVMIGSLFAGHEESPGETIERDGKLYKEYFGSASEFQKGEKKNVEGKKMFVEHKGSLEDTLIEMEQDLQSSISYAGGTKLDAIRTVDYVVVKNSIFNGDKVY.

Cys176 functions as the Thioimidate intermediate in the catalytic mechanism. Position 205-228 (205-228 (IIADGGIRTHGDVAKSIRFGATMV)) interacts with NADP(+).

It belongs to the IMPDH/GMPR family. GuaC type 2 subfamily.

The enzyme catalyses IMP + NH4(+) + NADP(+) = GMP + NADPH + 2 H(+). Functionally, catalyzes the irreversible NADPH-dependent deamination of GMP to IMP. It functions in the conversion of nucleobase, nucleoside and nucleotide derivatives of G to A nucleotides, and in maintaining the intracellular balance of A and G nucleotides. The polypeptide is GMP reductase (Bacillus cereus (strain ATCC 14579 / DSM 31 / CCUG 7414 / JCM 2152 / NBRC 15305 / NCIMB 9373 / NCTC 2599 / NRRL B-3711)).